The sequence spans 207 residues: Putative 3-methyladenine DNA glycosylase (207 aa).

The protein belongs to the DNA glycosylase MPG family.

The polypeptide is Putative 3-methyladenine DNA glycosylase (Burkholderia cenocepacia (strain HI2424)).